Consider the following 398-residue polypeptide: Lysophosphatidylserine lipase ABHD12 (398 aa).

Positions 1 to 15 (MRKRTEPVTLEHERC) are enriched in basic and acidic residues. A disordered region spans residues 1–24 (MRKRTEPVTLEHERCAASGSSSSG). Topologically, residues 1 to 74 (MRKRTEPVTL…RKSLWFRLRK (74 aa)) are cytoplasmic. The helical transmembrane segment at 75 to 95 (ILLCVLGFYIAIPFLVKLCPG) threads the bilayer. At 96–398 (IQAKLIFLNF…LGKSEPERQH (303 aa)) the chain is on the extracellular side. N123 carries N-linked (GlcNAc...) asparagine glycosylation. S246 acts as the Nucleophile in catalysis. Catalysis depends on charge relay system residues D333 and H372.

This sequence belongs to the serine esterase family. Post-translationally, glycosylated.

The protein resides in the endoplasmic reticulum membrane. It localises to the mitochondrion. The catalysed reaction is 1-(9Z-octadecenoyl)-sn-glycero-3-phospho-L-serine + H2O = sn-glycero-3-phospho-L-serine + (9Z)-octadecenoate + H(+). It catalyses the reaction 1-(9Z-octadecenoyl)-sn-glycero-3-phospho-(1'-sn-glycerol) + H2O = sn-glycero-3-phospho-(1'-sn-glycerol) + (9Z)-octadecenoate + H(+). It carries out the reaction 1-(9Z-octadecenoyl)-sn-glycero-3-phospho-(1D-myo-inositol) + H2O = sn-glycero-3-phospho-1D-myo-inositol + (9Z)-octadecenoate + H(+). The enzyme catalyses 1-(9Z-octadecenoyl)-sn-glycero-3-phosphoethanolamine + H2O = sn-glycero-3-phosphoethanolamine + (9Z)-octadecenoate + H(+). The catalysed reaction is 1-(9Z-octadecenoyl)-sn-glycero-3-phosphocholine + H2O = 1-(9Z-octadecenoyl)-sn-glycerol + phosphocholine + H(+). It catalyses the reaction 2-(9Z-octadecenoyl)-glycerol + H2O = glycerol + (9Z)-octadecenoate + H(+). It carries out the reaction 1-hexadecanoyl-sn-glycero-3-phospho-L-serine + H2O = sn-glycero-3-phospho-L-serine + hexadecanoate + H(+). The enzyme catalyses 2-(5Z,8Z,11Z,14Z-eicosatetraenoyl)-glycerol + H2O = glycerol + (5Z,8Z,11Z,14Z)-eicosatetraenoate + H(+). The catalysed reaction is Hydrolyzes glycerol monoesters of long-chain fatty acids.. It catalyses the reaction 1-decanoylglycerol + H2O = decanoate + glycerol + H(+). It carries out the reaction 1-dodecanoylglycerol + H2O = dodecanoate + glycerol + H(+). The enzyme catalyses 1-tetradecanoylglycerol + H2O = tetradecanoate + glycerol + H(+). The catalysed reaction is 2-hexadecanoylglycerol + H2O = glycerol + hexadecanoate + H(+). It catalyses the reaction 1-(9Z-octadecenoyl)-glycerol + H2O = glycerol + (9Z)-octadecenoate + H(+). It carries out the reaction 2-(9Z,12Z-octadecadienoyl)-glycerol + H2O = (9Z,12Z)-octadecadienoate + glycerol + H(+). The enzyme catalyses 1-(5Z,8Z,11Z,14Z-eicosatetraenoyl)-glycerol + H2O = glycerol + (5Z,8Z,11Z,14Z)-eicosatetraenoate + H(+). The catalysed reaction is 1-(9Z,12Z-octadecadienoyl)-glycerol + H2O = (9Z,12Z)-octadecadienoate + glycerol + H(+). It catalyses the reaction 1-hexadecanoylglycerol + H2O = glycerol + hexadecanoate + H(+). It carries out the reaction 1-octadecanoylglycerol + H2O = octadecanoate + glycerol + H(+). The enzyme catalyses 1-octadecanoyl-2-(9,10-epoxyoctadecanoyl)-sn-glycero-3-phospho-L-serine + H2O = 9,10-epoxyoctadecanoate + 1-octadecanoyl-sn-glycero-3-phosphoserine + H(+). The catalysed reaction is 1-octadecanoyl-2-(10-hydroxyoctadecanoyl)-sn-glycero-3-phospho-L-serine + H2O = 1-octadecanoyl-sn-glycero-3-phosphoserine + 10-hydroxyoctadecanoate + H(+). It catalyses the reaction 1-hexadecanoyl-2-(10-hydroxyoctadecanoyl)-sn-glycero-3-phospho-L-serine + H2O = 10-hydroxyoctadecanoate + 1-hexadecanoyl-sn-glycero-3-phospho-L-serine + H(+). With respect to regulation, selectively inhibited by DO264 (N-3-pyridyl-N'-(1-[3-chloro-4-{2-chloro-4-(trifluoromethoxy)phenoxy}pyridine-2-yl]piperidin-4-yl)thiourea). Lysophosphatidylserine (LPS) lipase that mediates the hydrolysis of lysophosphatidylserine, a class of signaling lipids that regulates immunological and neurological processes. Represents a major lysophosphatidylserine lipase in the brain, thereby playing a key role in the central nervous system. Also able to hydrolyze oxidized phosphatidylserine; oxidized phosphatidylserine is produced in response to severe inflammatory stress and constitutes a proapoptotic 'eat me' signal. Also has monoacylglycerol (MAG) lipase activity: hydrolyzes 2-arachidonoylglycerol (2-AG), thereby acting as a regulator of endocannabinoid signaling pathways. Has a strong preference for very-long-chain lipid substrates; substrate specificity is likely due to improved catalysis and not improved substrate binding. This chain is Lysophosphatidylserine lipase ABHD12, found in Mus musculus (Mouse).